Consider the following 1178-residue polypeptide: Phytochrome B (1178 aa).

Residues M1 to S15 show a composition bias toward polar residues. The segment at M1–T58 is disordered. Positions H23 to S32 are enriched in basic residues. Residues A42 to T55 are compositionally biased toward gly residues. A GAF domain is found at D267–L449. C372 contacts phytochromobilin. PAS domains are found at residues V668–E739 and D802–I873. The region spanning Y950–R1170 is the Histidine kinase domain.

It belongs to the phytochrome family. As to quaternary structure, homodimer. Contains one covalently linked phytochromobilin chromophore.

Its function is as follows. Regulatory photoreceptor which exists in two forms that are reversibly interconvertible by light: the Pr form that absorbs maximally in the red region of the spectrum and the Pfr form that absorbs maximally in the far-red region. Photoconversion of Pr to Pfr induces an array of morphogenic responses, whereas reconversion of Pfr to Pr cancels the induction of those responses. Pfr controls the expression of a number of nuclear genes including those encoding the small subunit of ribulose-bisphosphate carboxylase, chlorophyll A/B binding protein, protochlorophyllide reductase, rRNA, etc. It also controls the expression of its own gene(s) in a negative feedback fashion. In Sorghum bicolor (Sorghum), this protein is Phytochrome B (PHYB).